Consider the following 430-residue polypeptide: GTPase Obg (430 aa).

The region spanning methionine 1–leucine 158 is the Obg domain. One can recognise an OBG-type G domain in the interval alanine 159–lysine 331. GTP contacts are provided by residues glycine 165–serine 172, phenylalanine 190–lysine 194, aspartate 212–glycine 215, asparagine 282–aspartate 285, and serine 312–alanine 314. 2 residues coordinate Mg(2+): serine 172 and threonine 192. In terms of domain architecture, OCT spans methionine 345 to leucine 430.

The protein belongs to the TRAFAC class OBG-HflX-like GTPase superfamily. OBG GTPase family. In terms of assembly, monomer. It depends on Mg(2+) as a cofactor.

Its subcellular location is the cytoplasm. In terms of biological role, an essential GTPase which binds GTP, GDP and possibly (p)ppGpp with moderate affinity, with high nucleotide exchange rates and a fairly low GTP hydrolysis rate. Plays a role in control of the cell cycle, stress response, ribosome biogenesis and in those bacteria that undergo differentiation, in morphogenesis control. This Clostridium beijerinckii (strain ATCC 51743 / NCIMB 8052) (Clostridium acetobutylicum) protein is GTPase Obg.